The following is a 378-amino-acid chain: Flagellar P-ring protein 2 (378 aa).

The N-terminal stretch at 1-33 (MHEVSDKTNAIHPLQRVSRALFALGLLCFAAMA) is a signal peptide.

This sequence belongs to the FlgI family. The basal body constitutes a major portion of the flagellar organelle and consists of four rings (L,P,S, and M) mounted on a central rod.

Its subcellular location is the periplasm. It is found in the bacterial flagellum basal body. Assembles around the rod to form the L-ring and probably protects the motor/basal body from shearing forces during rotation. The chain is Flagellar P-ring protein 2 from Hahella chejuensis (strain KCTC 2396).